The primary structure comprises 273 residues: Formamidopyrimidine-DNA glycosylase (273 aa).

The active-site Schiff-base intermediate with DNA is proline 2. The Proton donor role is filled by glutamate 3. Lysine 58 serves as the catalytic Proton donor; for beta-elimination activity. 3 residues coordinate DNA: histidine 92, arginine 111, and lysine 153. An FPG-type zinc finger spans residues 238–272 (KVYGREGQSCLSCSSTIIKIKHSGRSTFYCKTCQY). The active-site Proton donor; for delta-elimination activity is the arginine 262.

The protein belongs to the FPG family. Monomer. Requires Zn(2+) as cofactor.

The catalysed reaction is Hydrolysis of DNA containing ring-opened 7-methylguanine residues, releasing 2,6-diamino-4-hydroxy-5-(N-methyl)formamidopyrimidine.. The enzyme catalyses 2'-deoxyribonucleotide-(2'-deoxyribose 5'-phosphate)-2'-deoxyribonucleotide-DNA = a 3'-end 2'-deoxyribonucleotide-(2,3-dehydro-2,3-deoxyribose 5'-phosphate)-DNA + a 5'-end 5'-phospho-2'-deoxyribonucleoside-DNA + H(+). Involved in base excision repair of DNA damaged by oxidation or by mutagenic agents. Acts as a DNA glycosylase that recognizes and removes damaged bases. Has a preference for oxidized purines, such as 7,8-dihydro-8-oxoguanine (8-oxoG). Has AP (apurinic/apyrimidinic) lyase activity and introduces nicks in the DNA strand. Cleaves the DNA backbone by beta-delta elimination to generate a single-strand break at the site of the removed base with both 3'- and 5'-phosphates. The polypeptide is Formamidopyrimidine-DNA glycosylase (Rickettsia conorii (strain ATCC VR-613 / Malish 7)).